The sequence spans 686 residues: ATP-dependent zinc metalloprotease FTSH 6, chloroplastic (686 aa).

A compositionally biased stretch (polar residues) spans 1–14 (MSPTAMSLTTTTSR). Residues 1-52 (MSPTAMSLTTTTSRLPICRAQGGGVAKEKRTTPPPAKITPPSSSSSEAAGLS) form a disordered region. The transit peptide at 1-75 (MSPTAMSLTT…LGLTAARPAR (75 aa)) directs the protein to the chloroplast. A compositionally biased stretch (low complexity) spans 39–52 (TPPSSSSSEAAGLS). The helical transmembrane segment at 164-184 (VMLLDLLVNFGFPLLFVASLL) threads the bilayer. 261-268 (GPPGTGKT) lines the ATP pocket. Histidine 483 contributes to the Zn(2+) binding site. The active site involves glutamate 484. Positions 487 and 562 each coordinate Zn(2+).

In the N-terminal section; belongs to the AAA ATPase family. It in the C-terminal section; belongs to the peptidase M41 family. It depends on Zn(2+) as a cofactor.

It localises to the plastid. The protein localises to the chloroplast thylakoid membrane. Probable ATP-dependent zinc metallopeptidase. This Oryza sativa subsp. japonica (Rice) protein is ATP-dependent zinc metalloprotease FTSH 6, chloroplastic (FTSH6).